The primary structure comprises 276 residues: Diaminopimelate epimerase (276 aa).

Residues Asn13, Gln46, and Asn66 each contribute to the substrate site. Residue Cys75 is the Proton donor of the active site. Substrate-binding positions include 76-77 (GN), Asn159, Asn192, and 210-211 (ER). Residue Cys219 is the Proton acceptor of the active site. 220–221 (GT) contacts substrate.

Belongs to the diaminopimelate epimerase family. In terms of assembly, homodimer.

It is found in the cytoplasm. It carries out the reaction (2S,6S)-2,6-diaminopimelate = meso-2,6-diaminopimelate. Its pathway is amino-acid biosynthesis; L-lysine biosynthesis via DAP pathway; DL-2,6-diaminopimelate from LL-2,6-diaminopimelate: step 1/1. Functionally, catalyzes the stereoinversion of LL-2,6-diaminopimelate (L,L-DAP) to meso-diaminopimelate (meso-DAP), a precursor of L-lysine and an essential component of the bacterial peptidoglycan. The chain is Diaminopimelate epimerase from Chromobacterium violaceum (strain ATCC 12472 / DSM 30191 / JCM 1249 / CCUG 213 / NBRC 12614 / NCIMB 9131 / NCTC 9757 / MK).